A 359-amino-acid chain; its full sequence is UDP-3-O-acylglucosamine N-acyltransferase (359 aa).

The Proton acceptor role is filled by His247.

Belongs to the transferase hexapeptide repeat family. LpxD subfamily. In terms of assembly, homotrimer.

The enzyme catalyses a UDP-3-O-[(3R)-3-hydroxyacyl]-alpha-D-glucosamine + a (3R)-hydroxyacyl-[ACP] = a UDP-2-N,3-O-bis[(3R)-3-hydroxyacyl]-alpha-D-glucosamine + holo-[ACP] + H(+). It participates in bacterial outer membrane biogenesis; LPS lipid A biosynthesis. In terms of biological role, catalyzes the N-acylation of UDP-3-O-acylglucosamine using 3-hydroxyacyl-ACP as the acyl donor. Is involved in the biosynthesis of lipid A, a phosphorylated glycolipid that anchors the lipopolysaccharide to the outer membrane of the cell. This Chlorobium chlorochromatii (strain CaD3) protein is UDP-3-O-acylglucosamine N-acyltransferase.